We begin with the raw amino-acid sequence, 344 residues long: NAD-dependent alcohol dehydrogenase (344 aa).

The Zn(2+) site is built by Cys38, His66, Asp96, Cys99, Cys102, Cys110, and Cys152.

This sequence belongs to the zinc-containing alcohol dehydrogenase family. In terms of assembly, homodimer and homotetramer. The cofactor is Zn(2+).

The catalysed reaction is a primary alcohol + NAD(+) = an aldehyde + NADH + H(+). It catalyses the reaction a secondary alcohol + NAD(+) = a ketone + NADH + H(+). This chain is NAD-dependent alcohol dehydrogenase (adh), found in Sulfolobus acidocaldarius (strain ATCC 33909 / DSM 639 / JCM 8929 / NBRC 15157 / NCIMB 11770).